Consider the following 581-residue polypeptide: Zinc finger protein 674 (581 aa).

The region spanning 8–79 is the KRAB domain; that stretch reads LTFKDVFVDF…DGGTPVRTCA (72 aa). 4 consecutive C2H2-type zinc fingers follow at residues 224-246, 252-274, 280-302, and 308-330; these read YKCTECGKVFIQKANLVVHQRTH, YECCECAKAFSQKSTLIAHQRTH, YECSECGKTFIQKSTLIKHQRTH, and FVCDKCPKAFKSSYHLIRHEKTH. Residues 357–371 show a composition bias toward basic and acidic residues; that stretch reads PQCSEHGKASDEKPS. Residues 357-377 form a disordered region; that stretch reads PQCSEHGKASDEKPSPTKHWR. 7 consecutive C2H2-type zinc fingers follow at residues 385 to 407, 413 to 435, 441 to 463, 469 to 491, 497 to 519, 525 to 547, and 553 to 575; these read YECSKCGKSFRGKSHLSVHQRIH, YECSICGKTFSGKSHLSVHHRTH, YECRRCGKAFGEKSTLIVHQRMH, YKCNECGKAFSEKSPLIKHQRIH, YECTDCKKAFSRKSTLIKHQRIH, YKCSECGKAFSVKSTLIVHHRTH, and YECRDCGKAFSGKSTLIKHQRSH.

It belongs to the krueppel C2H2-type zinc-finger protein family. In terms of tissue distribution, expressed in testis.

The protein resides in the nucleus. May be involved in transcriptional regulation. The sequence is that of Zinc finger protein 674 (ZNF674) from Homo sapiens (Human).